We begin with the raw amino-acid sequence, 285 residues long: Protoheme IX farnesyltransferase (285 aa).

A run of 9 helical transmembrane segments spans residues 13–33 (LGKLGVVSLLDLAAVAGAFLA), 40–60 (LLPIIPMFIGGTLASMGAMII), 89–109 (EAIIVGSLLAILGTALGFIDN), 110–130 (ILTAFFIALGVVIYIFVYTIL), 137–157 (LNIVIGGFAGSAAAWAGYTSL), 165–185 (GFLLGFLIFMWTPGHFWSLAL), 194–214 (AHYPMLPAVVGITTSARAIAI), 218–238 (LMIPIVLLLGYYINLIALIAF), and 265–285 (FIFSNIYLMLILLIMIIVKLI).

This sequence belongs to the UbiA prenyltransferase family. Protoheme IX farnesyltransferase subfamily.

The protein resides in the cell membrane. The catalysed reaction is heme b + (2E,6E)-farnesyl diphosphate + H2O = Fe(II)-heme o + diphosphate. It participates in porphyrin-containing compound metabolism; heme O biosynthesis; heme O from protoheme: step 1/1. In terms of biological role, converts heme B (protoheme IX) to heme O by substitution of the vinyl group on carbon 2 of heme B porphyrin ring with a hydroxyethyl farnesyl side group. This Saccharolobus islandicus (strain Y.G.57.14 / Yellowstone #1) (Sulfolobus islandicus) protein is Protoheme IX farnesyltransferase.